Reading from the N-terminus, the 155-residue chain is MAALSSAAVSVPSFAAATPMRSSRSSRMVVRASLGKKAASAAVAMAAGAMLLGGSAMAQDVLLGANGGVLVFEPNDFSVKAGETITFKNNAGYPHNVVFDEDAVPSGVDVSKISQEEYLTAPGETFSVTLTVPGTYGFYCEPHAGAGMVGKVTVN.

A chloroplast-targeting transit peptide spans 1-58; that stretch reads MAALSSAAVSVPSFAAATPMRSSRSSRMVVRASLGKKAASAAVAMAAGAMLLGGSAMA. The 97-residue stretch at 59–155 folds into the Plastocyanin-like domain; sequence QDVLLGANGG…AGMVGKVTVN (97 aa). The Cu cation site is built by His-95, Cys-140, His-143, and Met-148.

It belongs to the plastocyanin family. It depends on Cu(2+) as a cofactor.

The protein resides in the plastid. The protein localises to the chloroplast thylakoid membrane. Participates in electron transfer between P700 and the cytochrome b6-f complex in photosystem I. The sequence is that of Plastocyanin, chloroplastic (PETE) from Hordeum vulgare (Barley).